Here is a 170-residue protein sequence, read N- to C-terminus: MORN repeat-containing protein 5 (170 aa).

MORN repeat units follow at residues 8–30 (YFGE…TDTR), 31–53 (YIGE…SGSR), and 54–75 (FDAI…DGLQ).

Only detected in testis (at protein level).

It localises to the cell projection. It is found in the cilium. Its subcellular location is the flagellum. This is MORN repeat-containing protein 5 (Morn5) from Mus musculus (Mouse).